Reading from the N-terminus, the 232-residue chain is Oxidoreductase 1 (232 aa).

Belongs to the MQO family. FAD serves as cofactor.

In terms of biological role, oxidoreductase; part of the gene cluster that mediates the biosynthesis of elsinochromes, pigments consisting of at least four interconvertible tautomers (A, B, C and D) that have a core phenolic quinone to which various side chains are attached and which play an important role in fungal pathogenesis. The non-reducing polyketide synthase PKS1 was proposed to iteratively catalyze decarboxylation between acetyl-CoA and malonyl-CoA subunits for polyketide chain elongation. The released polyketide undergoes cyclization to form an aromatic ring, and proceeds via serial modification steps to produce the heptaketide back- bone of elsinochrome. As elsinochrome has a symmetrical structure, two identical heptaketides are fused to form a core 1,2-dihydrobenzo-perylene ring structure, which can then be successively modified to produce the various derivatives of elsinochrome. Some of these reactions may be cooperatively carried out, at least in part, by the products of RDT1, OXR1 and PKS1. PRF1, embedded within the elsinochrome cluster possibly functions to stabilize some of the biosynthetic enzymes required for elsinochrome production. As prefoldin is a hexamer containing 2 a and 4 b subunits, additional prefoldin subunits, whose coding genes may not immediately link to the elsinochrome biosynthetic gene cluster, are required to fulfill the chaperone function. In addition, no methyltransferase-coding gene exists within the biosynthetic gene cluster, even though elsinochrome has four methyl groups at positions C3, C7, C8 and C12. Apparently, the identified gene cluster does not contain the entire entourage of genes responsible for elsinochrome biosynthesis. Once elsinochrome is synthesized, it must be exported outside the fungal cells, which is probably accomplished by the ECT1 transporter, to avoid toxicity. The protein is Oxidoreductase 1 of Elsinoe fawcettii (Citrus scab fungus).